Consider the following 755-residue polypeptide: 1,4-alpha-glucan branching enzyme GlgB (755 aa).

Residue D431 is the Nucleophile of the active site. E484 acts as the Proton donor in catalysis.

This sequence belongs to the glycosyl hydrolase 13 family. GlgB subfamily. As to quaternary structure, monomer.

The enzyme catalyses Transfers a segment of a (1-&gt;4)-alpha-D-glucan chain to a primary hydroxy group in a similar glucan chain.. It functions in the pathway glycan biosynthesis; glycogen biosynthesis. In terms of biological role, catalyzes the formation of the alpha-1,6-glucosidic linkages in glycogen by scission of a 1,4-alpha-linked oligosaccharide from growing alpha-1,4-glucan chains and the subsequent attachment of the oligosaccharide to the alpha-1,6 position. This chain is 1,4-alpha-glucan branching enzyme GlgB, found in Prochlorococcus marinus (strain NATL1A).